The following is a 434-amino-acid chain: Glutamyl-tRNA reductase (434 aa).

Substrate is bound by residues 54-57 (TCNR), Ser-113, 118-120 (EAQ), and Gln-124. The Nucleophile role is filled by Cys-55. 193–198 (GGGEVS) lines the NADP(+) pocket.

It belongs to the glutamyl-tRNA reductase family. Homodimer.

It catalyses the reaction (S)-4-amino-5-oxopentanoate + tRNA(Glu) + NADP(+) = L-glutamyl-tRNA(Glu) + NADPH + H(+). Its pathway is porphyrin-containing compound metabolism; protoporphyrin-IX biosynthesis; 5-aminolevulinate from L-glutamyl-tRNA(Glu): step 1/2. It participates in porphyrin-containing compound metabolism; chlorophyll biosynthesis. Catalyzes the NADPH-dependent reduction of glutamyl-tRNA(Glu) to glutamate 1-semialdehyde (GSA). This is Glutamyl-tRNA reductase from Chloroflexus aurantiacus (strain ATCC 29366 / DSM 635 / J-10-fl).